We begin with the raw amino-acid sequence, 343 residues long: NADH-ubiquinone oxidoreductase chain 2 (343 aa).

Helical transmembrane passes span 1–21 (MNPM…TMIT), 59–81 (YYLI…ALNT), 96–116 (TIIT…SWLP), 150–170 (NITL…LGSL), 178–198 (LMAF…TMAP), 200–220 (ISTL…LLIN), 241–261 (MTIL…SGFM), and 270–290 (LISM…LLSL).

Belongs to the complex I subunit 2 family.

It localises to the mitochondrion inner membrane. It catalyses the reaction a ubiquinone + NADH + 5 H(+)(in) = a ubiquinol + NAD(+) + 4 H(+)(out). Its function is as follows. Core subunit of the mitochondrial membrane respiratory chain NADH dehydrogenase (Complex I) that is believed to belong to the minimal assembly required for catalysis. Complex I functions in the transfer of electrons from NADH to the respiratory chain. The immediate electron acceptor for the enzyme is believed to be ubiquinone. The protein is NADH-ubiquinone oxidoreductase chain 2 (MT-ND2) of Lycodon semicarinatus (Ryukyu odd-tooth snake).